The primary structure comprises 373 residues: Putative F-box/kelch-repeat protein At5g24040 (373 aa).

The F-box domain occupies 2-50 (VKWSELPPEILHLISLKIDNPFDLIHFRSVCSFWRSSSLLKFRHMTSLR). Kelch repeat units lie at residues 165-207 (NEYM…PFKG) and 262-308 (YDFH…CTFS).

In Arabidopsis thaliana (Mouse-ear cress), this protein is Putative F-box/kelch-repeat protein At5g24040.